Reading from the N-terminus, the 358-residue chain is Ribosomal RNA large subunit methyltransferase M (358 aa).

S-adenosyl-L-methionine is bound by residues Ser-187, 220 to 223 (CPGG), Asp-239, Asp-259, and Asp-276. Lys-305 functions as the Proton acceptor in the catalytic mechanism.

It belongs to the class I-like SAM-binding methyltransferase superfamily. RNA methyltransferase RlmE family. RlmM subfamily. As to quaternary structure, monomer.

The protein resides in the cytoplasm. It carries out the reaction cytidine(2498) in 23S rRNA + S-adenosyl-L-methionine = 2'-O-methylcytidine(2498) in 23S rRNA + S-adenosyl-L-homocysteine + H(+). In terms of biological role, catalyzes the 2'-O-methylation at nucleotide C2498 in 23S rRNA. This is Ribosomal RNA large subunit methyltransferase M from Shewanella woodyi (strain ATCC 51908 / MS32).